The sequence spans 197 residues: Phospholipid hydroperoxide glutathione peroxidase (197 aa).

Phosphoserine is present on Ser-40. Residue Sec-73 is part of the active site. A non-standard amino acid (selenocysteine) is located at residue Sec-73.

The protein belongs to the glutathione peroxidase family. As to quaternary structure, monomer. Has a tendency to form higher mass oligomers. Interacts with FUNDC1; this interaction promotes GPX4 recruitment into mitochondria through TOM/TIM complex where it is degraded by mitophagy.

The protein localises to the mitochondrion. The protein resides in the cytoplasm. The enzyme catalyses a hydroperoxy polyunsaturated fatty acid + 2 glutathione = a hydroxy polyunsaturated fatty acid + glutathione disulfide + H2O. It carries out the reaction 2 glutathione + H2O2 = glutathione disulfide + 2 H2O. It catalyses the reaction tert-butyl hydroperoxide + 2 glutathione = tert-butanol + glutathione disulfide + H2O. The catalysed reaction is cumene hydroperoxide + 2 glutathione = 2-phenylpropan-2-ol + glutathione disulfide + H2O. The enzyme catalyses (9S)-hydroperoxy-(10E,12Z)-octadecadienoate + 2 glutathione = (9S)-hydroxy-(10E,12Z)-octadecadienoate + glutathione disulfide + H2O. It carries out the reaction (13S)-hydroperoxy-(9Z,11E)-octadecadienoate + 2 glutathione = (13S)-hydroxy-(9Z,11E)-octadecadienoate + glutathione disulfide + H2O. It catalyses the reaction (5S)-hydroperoxy-(6E,8Z,11Z,14Z)-eicosatetraenoate + 2 glutathione = (5S)-hydroxy-(6E,8Z,11Z,14Z)-eicosatetraenoate + glutathione disulfide + H2O. The catalysed reaction is (12R)-hydroperoxy-(5Z,8Z,10E,14Z)-eicosatetraenoate + 2 glutathione = (12R)-hydroxy-(5Z,8Z,10E,14Z)-eicosatetraenoate + glutathione disulfide + H2O. The enzyme catalyses (12S)-hydroperoxy-(5Z,8Z,10E,14Z)-eicosatetraenoate + 2 glutathione = (12S)-hydroxy-(5Z,8Z,10E,14Z)-eicosatetraenoate + glutathione disulfide + H2O. It carries out the reaction (15S)-hydroperoxy-(5Z,8Z,11Z,13E)-eicosatetraenoate + 2 glutathione = (15S)-hydroxy-(5Z,8Z,11Z,13E)-eicosatetraenoate + glutathione disulfide + H2O. It catalyses the reaction (5S)-hydroperoxy-(6E,8Z,11Z,14Z,17Z)-eicosapentaenoate + 2 glutathione = (5S)-hydroxy-(6E,8Z,11Z,14Z,17Z)-eicosapentaenoate + glutathione disulfide + H2O. The catalysed reaction is (12S)-hydroperoxy-(5Z,8Z,10E,14Z,17Z)-eicosapentaenoate + 2 glutathione = (12S)-hydroxy-(5Z,8Z,10E,14Z,17Z)-eicosapentaenoate + glutathione disulfide + H2O. The enzyme catalyses (15S)-hydroperoxy-(5Z,8Z,11Z,13E,17Z)-eicosapentaenoate + 2 glutathione = (15S)-hydroxy-(5Z,8Z,11Z,13E,17Z)-eicosapentaenoate + glutathione disulfide + H2O. It carries out the reaction (15S)-hydroperoxy-(11Z,13E)-eicosadienoate + 2 glutathione = (15S)-hydroxy-(11Z,13E)-eicosadienoate + glutathione disulfide + H2O. It catalyses the reaction (17S)-hydroperoxy-(4Z,7Z,10Z,13Z,15E,19Z)-docosahexaenoate + 2 glutathione = (17S)-hydroxy-(4Z,7Z,10Z,13Z,15E,19Z)-docosahexaenoate + glutathione disulfide + H2O. The catalysed reaction is a hydroperoxy-1,2-diacyl-glycero-3-phosphocholine + 2 glutathione = a hydroxy-1,2-diacyl-glycero-3-phosphocholine + glutathione disulfide + H2O. Essential antioxidant peroxidase that directly reduces phospholipid hydroperoxide even if they are incorporated in membranes and lipoproteins. Can also reduce fatty acid hydroperoxide, cholesterol hydroperoxide and thymine hydroperoxide. Plays a key role in protecting cells from oxidative damage by preventing membrane lipid peroxidation. Required to prevent cells from ferroptosis, a non-apoptotic cell death resulting from an iron-dependent accumulation of lipid reactive oxygen species. The presence of selenocysteine (Sec) versus Cys at the active site is essential for life: it provides resistance to overoxidation and prevents cells against ferroptosis. The presence of Sec at the active site is also essential for the survival of a specific type of parvalbumin-positive interneurons, thereby preventing against fatal epileptic seizures. May be required to protect cells from the toxicity of ingested lipid hydroperoxides. Required for normal sperm development and male fertility. Essential for maturation and survival of photoreceptor cells. Plays a role in a primary T-cell response to viral and parasitic infection by protecting T-cells from ferroptosis and by supporting T-cell expansion. Plays a role of glutathione peroxidase in platelets in the arachidonic acid metabolism. Reduces hydroperoxy ester lipids formed by a 15-lipoxygenase that may play a role as down-regulator of the cellular 15-lipoxygenase pathway. Can also reduce small soluble hydroperoxides such as H2O2, cumene hydroperoxide and tert-butyl hydroperoxide. This Pongo pygmaeus (Bornean orangutan) protein is Phospholipid hydroperoxide glutathione peroxidase.